Reading from the N-terminus, the 423-residue chain is Gamma-glutamyl phosphate reductase (423 aa).

It belongs to the gamma-glutamyl phosphate reductase family.

It is found in the cytoplasm. The catalysed reaction is L-glutamate 5-semialdehyde + phosphate + NADP(+) = L-glutamyl 5-phosphate + NADPH + H(+). It functions in the pathway amino-acid biosynthesis; L-proline biosynthesis; L-glutamate 5-semialdehyde from L-glutamate: step 2/2. Functionally, catalyzes the NADPH-dependent reduction of L-glutamate 5-phosphate into L-glutamate 5-semialdehyde and phosphate. The product spontaneously undergoes cyclization to form 1-pyrroline-5-carboxylate. This is Gamma-glutamyl phosphate reductase from Paramagnetospirillum magneticum (strain ATCC 700264 / AMB-1) (Magnetospirillum magneticum).